The primary structure comprises 356 residues: UDP-N-acetylglucosamine--N-acetylmuramyl-(pentapeptide) pyrophosphoryl-undecaprenol N-acetylglucosamine transferase (356 aa).

UDP-N-acetyl-alpha-D-glucosamine is bound by residues Thr11 to Gly13, Asn123, Arg159, Ser187, Ile241, Ala260 to Glu265, and Gln286.

Belongs to the glycosyltransferase 28 family. MurG subfamily.

The protein resides in the cell inner membrane. The catalysed reaction is di-trans,octa-cis-undecaprenyl diphospho-N-acetyl-alpha-D-muramoyl-L-alanyl-D-glutamyl-meso-2,6-diaminopimeloyl-D-alanyl-D-alanine + UDP-N-acetyl-alpha-D-glucosamine = di-trans,octa-cis-undecaprenyl diphospho-[N-acetyl-alpha-D-glucosaminyl-(1-&gt;4)]-N-acetyl-alpha-D-muramoyl-L-alanyl-D-glutamyl-meso-2,6-diaminopimeloyl-D-alanyl-D-alanine + UDP + H(+). It participates in cell wall biogenesis; peptidoglycan biosynthesis. Its function is as follows. Cell wall formation. Catalyzes the transfer of a GlcNAc subunit on undecaprenyl-pyrophosphoryl-MurNAc-pentapeptide (lipid intermediate I) to form undecaprenyl-pyrophosphoryl-MurNAc-(pentapeptide)GlcNAc (lipid intermediate II). The chain is UDP-N-acetylglucosamine--N-acetylmuramyl-(pentapeptide) pyrophosphoryl-undecaprenol N-acetylglucosamine transferase from Azoarcus sp. (strain BH72).